We begin with the raw amino-acid sequence, 166 residues long: Anaerobic nitrite reductase NSHB1 (166 aa).

One can recognise a Globin domain in the interval 13 to 163 (SFSEEQEALV…LVAAIKQEMK (151 aa)). The Homodimerization motif lies at 46-50 (EVAPS). 6 residues coordinate heme b: serine 56, lysine 70, histidine 74, arginine 104, threonine 108, and histidine 109. A Homodimerization motif is present at residues 116 to 128 (DAHFEVVKFALLD).

Belongs to the plant globin family. In terms of assembly, homodimer. Heme b is required as a cofactor. As to expression, expressed in coleoptiles, embryos, leaves, seminal roots and roots.

It is found in the cytoplasm. The protein resides in the nucleus. The catalysed reaction is Fe(III)-heme b-[protein] + nitric oxide + H2O = Fe(II)-heme b-[protein] + nitrite + 2 H(+). Its activity is regulated as follows. Slowly reduced by ascorbic acid (AA); this reaction may become a source of nitric oxide (NO) during hypoxia. Its function is as follows. Phytoglobin that reduces nitrite to nitric oxide under anoxic conditions (e.g. during flooding or in waterlogged soil). May not function as an oxygen storage or transport protein. Has an unusually high affinity for O(2) through a hexacoordinate heme iron because of a very low dissociation constant. This is Anaerobic nitrite reductase NSHB1 from Oryza sativa subsp. japonica (Rice).